The primary structure comprises 862 residues: Eukaryotic translation initiation factor 3 subunit C (862 aa).

A disordered region spans residues 1-81; sequence MSSRFFYGGG…EEEEKVTVVK (81 aa). Residues 17-54 show a composition bias toward acidic residues; sequence SSDEEELYSDREEEEKSEEEESSEEEDETSEEEESDEE. Residues 55–65 show a composition bias toward basic and acidic residues; sequence TGARKFLKDVA. The segment covering 66 to 75 has biased composition (acidic residues); the sequence is SDSEEEEEEE. A PCI domain is found at 600-774; that stretch reads FHMHINLELL…NAIVFRKGVE (175 aa). A disordered region spans residues 813-862; the sequence is RDQGAGARGGRGSGRGGQARGGPRFPGGQQGRRPGGQQFGGGALGGAIKA. Residues 818–862 are compositionally biased toward gly residues; that stretch reads GARGGRGSGRGGQARGGPRFPGGQQGRRPGGQQFGGGALGGAIKA.

It belongs to the eIF-3 subunit C family. Component of the eukaryotic translation initiation factor 3 (eIF-3) complex.

Its subcellular location is the cytoplasm. In terms of biological role, component of the eukaryotic translation initiation factor 3 (eIF-3) complex, which is involved in protein synthesis of a specialized repertoire of mRNAs and, together with other initiation factors, stimulates binding of mRNA and methionyl-tRNAi to the 40S ribosome. The eIF-3 complex specifically targets and initiates translation of a subset of mRNAs involved in cell proliferation. The protein is Eukaryotic translation initiation factor 3 subunit C (nip1) of Aspergillus fumigatus (strain CBS 144.89 / FGSC A1163 / CEA10) (Neosartorya fumigata).